A 123-amino-acid chain; its full sequence is MQPNDITFYQRFEADILAGHKTISIRDDSESHFKAGDILRVGRFEDNQYFCNIEVLSVSPITLDELTQPHAKQENMGLDELKEVIRGIYPNEIIFWVIQFSLKEYFNEEKCVREIIITDRKFN.

Residues 6–101 (ITFYQRFEAD…EIIFWVIQFS (96 aa)) form the ASCH domain. Lys-21 acts as the Proton acceptor in catalysis. The active-site Nucleophile is Ser-24. Glu-74 acts as the Proton donor in catalysis.

Belongs to the N(4)-acetylcytidine amidohydrolase family.

It catalyses the reaction N(4)-acetylcytidine + H2O = cytidine + acetate + H(+). It carries out the reaction N(4)-acetyl-2'-deoxycytidine + H2O = 2'-deoxycytidine + acetate + H(+). The enzyme catalyses N(4)-acetylcytosine + H2O = cytosine + acetate + H(+). Functionally, catalyzes the hydrolysis of N(4)-acetylcytidine (ac4C). This chain is N(4)-acetylcytidine amidohydrolase, found in Haemophilus influenzae (strain ATCC 51907 / DSM 11121 / KW20 / Rd).